A 1095-amino-acid chain; its full sequence is Putative disease resistance protein At4g11170 (1095 aa).

Positions 9–173 (WRYDVFPSFR…TISKDVLEKL (165 aa)) constitute a TIR domain. Glutamate 84 is a catalytic residue. An NB-ARC domain is found at 168 to 454 (DVLEKLNATP…HENYLKQMII (287 aa)). LRR repeat units follow at residues 609-631 (CLVE…QPLR), 632-654 (NLRT…MEAT), 655-677 (KLNR…IKNL), 679-701 (HLIL…INLP), 702-722 (SLEV…EIST), and 723-744 (NIRL…VKYW).

It carries out the reaction NAD(+) + H2O = ADP-D-ribose + nicotinamide + H(+). The protein is Putative disease resistance protein At4g11170 of Arabidopsis thaliana (Mouse-ear cress).